The following is a 60-amino-acid chain: Metallothionein B (60 aa).

The beta stretch occupies residues 1–28; sequence MDPCECTKSGTCNCGGSCTCTNCSCTSC. Residues cysteine 4, cysteine 6, cysteine 12, cysteine 14, cysteine 18, cysteine 20, cysteine 23, cysteine 25, cysteine 28, cysteine 32, cysteine 33, cysteine 35, cysteine 36, cysteine 40, cysteine 43, cysteine 47, cysteine 49, cysteine 54, cysteine 58, and cysteine 59 each contribute to the a divalent metal cation site. The alpha stretch occupies residues 29–60; it reads KKSCCPCCPSGCTKCASGCVCKGKTCDTSCCQ.

This sequence belongs to the metallothionein superfamily. Type 1 family.

Functionally, metallothioneins have a high content of cysteine residues that bind various heavy metals. This Chaenocephalus aceratus (Blackfin icefish) protein is Metallothionein B (mtb).